The following is a 759-amino-acid chain: Serine/threonine-protein kinase HRK1 (759 aa).

Residues 1-32 (MPNLLSRNPFHGHHNDHHHDRENSSNNPPQLI) form a disordered region. Residue S37 is modified to Phosphoserine. The segment at 45 to 162 (KQSNDSLRSE…PPPSKSTSTV (118 aa)) is disordered. Residues 59 to 97 (SMKSTTTTTNYTTTNLNNNTHSHSNATSISTNNYNNNYE) are compositionally biased toward low complexity. A compositionally biased stretch (polar residues) spans 113 to 122 (SPASPKQTHS). A Protein kinase domain is found at 215 to 722 (GKLGKLLGSG…LDDIFNDEWF (508 aa)). ATP-binding positions include 221 to 229 (LGSGAGGSV) and K244. D340 serves as the catalytic Proton acceptor. Phosphoserine is present on residues S382 and S472. Residues 493-502 (PNTPASIQGK) are compositionally biased toward polar residues. Disordered stretches follow at residues 493 to 578 (PNTP…GRVD) and 614 to 682 (AANA…KIIH). Residue T495 is modified to Phosphothreonine. At S498 the chain carries Phosphoserine. The span at 510–519 (VEEETEENKE) shows a compositional bias: acidic residues. Basic and acidic residues predominate over residues 520–547 (DDSNNDKESTPDNDKESTIDIKISKNEN). The segment covering 614–646 (AANANPDMVPQNNPQQQQQQQQQQQQQQQQQQQ) has biased composition (low complexity). Residues 663-672 (ASDNKSSQQH) show a composition bias toward polar residues.

This sequence belongs to the protein kinase superfamily. Ser/Thr protein kinase family.

The protein localises to the cytoplasm. The catalysed reaction is L-seryl-[protein] + ATP = O-phospho-L-seryl-[protein] + ADP + H(+). It catalyses the reaction L-threonyl-[protein] + ATP = O-phospho-L-threonyl-[protein] + ADP + H(+). Involved in regulating the activity of the plasma membrane proton pump PMA1. The polypeptide is Serine/threonine-protein kinase HRK1 (HRK1) (Saccharomyces cerevisiae (strain ATCC 204508 / S288c) (Baker's yeast)).